Consider the following 539-residue polypeptide: Phenylalanine--tRNA ligase beta subunit (539 aa).

One can recognise a B5 domain in the interval 271–347; that stretch reads LSPARWTVTT…KSYGYENLKA (77 aa). The Mg(2+) site is built by aspartate 325, aspartate 331, glutamate 334, and aspartate 335.

The protein belongs to the phenylalanyl-tRNA synthetase beta subunit family. Type 2 subfamily. As to quaternary structure, tetramer of two alpha and two beta subunits. It depends on Mg(2+) as a cofactor.

It is found in the cytoplasm. The enzyme catalyses tRNA(Phe) + L-phenylalanine + ATP = L-phenylalanyl-tRNA(Phe) + AMP + diphosphate + H(+). The sequence is that of Phenylalanine--tRNA ligase beta subunit from Methanothrix thermoacetophila (strain DSM 6194 / JCM 14653 / NBRC 101360 / PT) (Methanosaeta thermophila).